The chain runs to 244 residues: WUSCHEL-related homeobox 3 (244 aa).

Residues 4-68 (VASTRWCPTP…NHKARDRQKL (65 aa)) constitute a DNA-binding region (homeobox; WUS-type).

It belongs to the WUS homeobox family. In terms of tissue distribution, expressed in aerial parts of seedlings, inflorescences and flowers at low level. Expressed in a restricted number of L1 cells at the lateral regions of flower primordia.

The protein localises to the nucleus. Functionally, probable transcription factor required to initiate organ founder cells in a lateral domain of shoot meristems. Involved in the lateral sepal axis-dependent development of flowers, probably by regulating the proliferation of L1 cells at the lateral region of flower primordia. Required for the formation of the margin cells of the first and second whorl organs. This is WUSCHEL-related homeobox 3 (WOX3) from Arabidopsis thaliana (Mouse-ear cress).